Here is a 384-residue protein sequence, read N- to C-terminus: uncharacterized protein (384 aa).

Positions 327–339 (KKEKKEKKEKKPK) are enriched in basic residues. The interval 327-358 (KKEKKEKKEKKPKKAVEEEPKQYLTPEFVNDD) is disordered.

This is an uncharacterized protein from Magallana gigas (Pacific oyster).